A 424-amino-acid chain; its full sequence is Histidine--tRNA ligase (424 aa).

It belongs to the class-II aminoacyl-tRNA synthetase family. As to quaternary structure, homodimer.

Its subcellular location is the cytoplasm. The catalysed reaction is tRNA(His) + L-histidine + ATP = L-histidyl-tRNA(His) + AMP + diphosphate + H(+). The protein is Histidine--tRNA ligase of Desulfitobacterium hafniense (strain DSM 10664 / DCB-2).